Reading from the N-terminus, the 504-residue chain is Arabinose import ATP-binding protein AraG (504 aa).

ABC transporter domains are found at residues 8–243 (LSFR…MVGR) and 256–499 (YGEE…MPKV). 40–47 (GENGAGKS) lines the ATP pocket.

Belongs to the ABC transporter superfamily. Arabinose importer (TC 3.A.1.2.2) family. The complex is composed of two ATP-binding proteins (AraG), two transmembrane proteins (AraH) and a solute-binding protein (AraF).

Its subcellular location is the cell inner membrane. The catalysed reaction is L-arabinose(out) + ATP + H2O = L-arabinose(in) + ADP + phosphate + H(+). Functionally, part of the ABC transporter complex AraFGH involved in arabinose import. Responsible for energy coupling to the transport system. The chain is Arabinose import ATP-binding protein AraG from Shigella flexneri.